The primary structure comprises 266 residues: UPF0354 protein lin1649 (266 aa).

Belongs to the UPF0354 family.

This chain is UPF0354 protein lin1649, found in Listeria innocua serovar 6a (strain ATCC BAA-680 / CLIP 11262).